The chain runs to 229 residues: 7-cyano-7-deazaguanine synthase (229 aa).

An ATP-binding site is contributed by 7-17 (LSGGLDSSTIL). Cys-191, Cys-199, Cys-202, and Cys-205 together coordinate Zn(2+).

It belongs to the QueC family. Requires Zn(2+) as cofactor.

The catalysed reaction is 7-carboxy-7-deazaguanine + NH4(+) + ATP = 7-cyano-7-deazaguanine + ADP + phosphate + H2O + H(+). It participates in purine metabolism; 7-cyano-7-deazaguanine biosynthesis. In terms of biological role, catalyzes the ATP-dependent conversion of 7-carboxy-7-deazaguanine (CDG) to 7-cyano-7-deazaguanine (preQ(0)). This Nostoc sp. (strain PCC 7120 / SAG 25.82 / UTEX 2576) protein is 7-cyano-7-deazaguanine synthase.